The following is a 438-amino-acid chain: Xylose isomerase (438 aa).

Active-site residues include His100 and Asp103. Residues Glu231, Glu267, His270, Asp295, Asp306, Asp308, and Asp338 each coordinate Mg(2+).

This sequence belongs to the xylose isomerase family. Homotetramer. Mg(2+) is required as a cofactor.

The protein localises to the cytoplasm. The catalysed reaction is alpha-D-xylose = alpha-D-xylulofuranose. The sequence is that of Xylose isomerase from Pseudomonas savastanoi pv. phaseolicola (strain 1448A / Race 6) (Pseudomonas syringae pv. phaseolicola (strain 1448A / Race 6)).